Consider the following 518-residue polypeptide: Subtilisin-like protease 1 (518 aa).

A signal peptide spans Met-1 to Ala-19. Positions Ala-20–His-116 are excised as a propeptide. Residues Ser-34 to Val-115 enclose the Inhibitor I9 domain. Residues Ser-126–Lys-400 form the Peptidase S8 domain. Residues Asp-158 and His-190 each act as charge relay system in the active site. A disordered region spans residues Gly-175–Met-198. N-linked (GlcNAc...) asparagine glycosylation is found at Asn-233 and Asn-251. Over residues Asn-282–Ser-294 the composition is skewed to polar residues. A disordered region spans residues Asn-282 to Ser-312. The active-site Charge relay system is Ser-345. The segment covering Thr-378–Ile-394 has biased composition (polar residues). A disordered region spans residues Thr-378–Phe-496. Pro residues-rich tracts occupy residues Asn-405 to Pro-470 and Ala-478 to Pro-487.

Belongs to the peptidase S8 family.

Its subcellular location is the secreted. Secreted subtilisin-like serine protease with keratinolytic activity that contributes to pathogenicity. The chain is Subtilisin-like protease 1 (SUB1) from Trichophyton verrucosum (strain HKI 0517).